Reading from the N-terminus, the 269-residue chain is 4-hydroxy-tetrahydrodipicolinate reductase (269 aa).

11-16 (GPIGRM) contacts NAD(+). Residue Lys-39 participates in NADP(+) binding. Residues 101–103 (GTT) and 125–128 (ASNF) each bind NAD(+). His-158 (proton donor/acceptor) is an active-site residue. A (S)-2,3,4,5-tetrahydrodipicolinate-binding site is contributed by His-159. Lys-162 acts as the Proton donor in catalysis. 168–169 (GT) contacts (S)-2,3,4,5-tetrahydrodipicolinate.

This sequence belongs to the DapB family. As to quaternary structure, homotetramer.

The protein resides in the cytoplasm. The catalysed reaction is (S)-2,3,4,5-tetrahydrodipicolinate + NAD(+) + H2O = (2S,4S)-4-hydroxy-2,3,4,5-tetrahydrodipicolinate + NADH + H(+). It catalyses the reaction (S)-2,3,4,5-tetrahydrodipicolinate + NADP(+) + H2O = (2S,4S)-4-hydroxy-2,3,4,5-tetrahydrodipicolinate + NADPH + H(+). It functions in the pathway amino-acid biosynthesis; L-lysine biosynthesis via DAP pathway; (S)-tetrahydrodipicolinate from L-aspartate: step 4/4. In terms of biological role, catalyzes the conversion of 4-hydroxy-tetrahydrodipicolinate (HTPA) to tetrahydrodipicolinate. The polypeptide is 4-hydroxy-tetrahydrodipicolinate reductase (Buchnera aphidicola subsp. Acyrthosiphon pisum (strain Tuc7)).